Reading from the N-terminus, the 270-residue chain is 3-methyl-2-oxobutanoate hydroxymethyltransferase (270 aa).

Mg(2+)-binding residues include Asp-43 and Asp-82. Residues 43–44 (DS), Asp-82, and Lys-110 contribute to the 3-methyl-2-oxobutanoate site. Position 112 (Glu-112) interacts with Mg(2+). The active-site Proton acceptor is the Glu-179.

The protein belongs to the PanB family. As to quaternary structure, homodecamer; pentamer of dimers. Mg(2+) serves as cofactor.

It is found in the cytoplasm. The catalysed reaction is 3-methyl-2-oxobutanoate + (6R)-5,10-methylene-5,6,7,8-tetrahydrofolate + H2O = 2-dehydropantoate + (6S)-5,6,7,8-tetrahydrofolate. The protein operates within cofactor biosynthesis; (R)-pantothenate biosynthesis; (R)-pantoate from 3-methyl-2-oxobutanoate: step 1/2. Functionally, catalyzes the reversible reaction in which hydroxymethyl group from 5,10-methylenetetrahydrofolate is transferred onto alpha-ketoisovalerate to form ketopantoate. The chain is 3-methyl-2-oxobutanoate hydroxymethyltransferase from Psychrobacter sp. (strain PRwf-1).